A 228-amino-acid polypeptide reads, in one-letter code: 2,3-bisphosphoglycerate-dependent phosphoglycerate mutase (228 aa).

Residues 8–15, 21–22, Arg60, 87–90, Lys98, 114–115, and 183–184 each bind substrate; these read RHGQSEWN, TG, ERHY, RR, and GN. The Tele-phosphohistidine intermediate role is filled by His9. Glu87 functions as the Proton donor/acceptor in the catalytic mechanism.

Belongs to the phosphoglycerate mutase family. BPG-dependent PGAM subfamily.

It catalyses the reaction (2R)-2-phosphoglycerate = (2R)-3-phosphoglycerate. Its pathway is carbohydrate degradation; glycolysis; pyruvate from D-glyceraldehyde 3-phosphate: step 3/5. Catalyzes the interconversion of 2-phosphoglycerate and 3-phosphoglycerate. This Staphylococcus aureus (strain Mu3 / ATCC 700698) protein is 2,3-bisphosphoglycerate-dependent phosphoglycerate mutase.